The primary structure comprises 103 residues: Large ribosomal subunit protein bL21 (103 aa).

The protein belongs to the bacterial ribosomal protein bL21 family. In terms of assembly, part of the 50S ribosomal subunit. Contacts protein L20.

This protein binds to 23S rRNA in the presence of protein L20. This Shewanella piezotolerans (strain WP3 / JCM 13877) protein is Large ribosomal subunit protein bL21.